The sequence spans 290 residues: MASLIDIKQRITSTRKTSQITKAMQMVSAAKLGRAESNARSYEPYVSKIKDVVTHVASTGNSSDHPMLVSRPVHRTGYIVLTSDTGLAGSYNSSVIKEVFQEINKKHTSSDEYAIITVGRSARDFFKARQMNVVLEVQGITDHPIFAEIKDIASNTVQMFEDGVYDEVFIYYNHHINSISSELRKEQLLPLTEFHEKGKETDVDLTTYEFEPSEQEILEVLLPQYVESLIFGALLDAKAAEHAARMTAMRSATDNASDLISDLSLQYNRARQAAITQEITEIVGGAAALE.

It belongs to the ATPase gamma chain family. As to quaternary structure, F-type ATPases have 2 components, CF(1) - the catalytic core - and CF(0) - the membrane proton channel. CF(1) has five subunits: alpha(3), beta(3), gamma(1), delta(1), epsilon(1). CF(0) has three main subunits: a, b and c.

The protein resides in the cell membrane. In terms of biological role, produces ATP from ADP in the presence of a proton gradient across the membrane. The gamma chain is believed to be important in regulating ATPase activity and the flow of protons through the CF(0) complex. The chain is ATP synthase gamma chain from Listeria innocua serovar 6a (strain ATCC BAA-680 / CLIP 11262).